We begin with the raw amino-acid sequence, 390 residues long: T-cell surface glycoprotein CD1e, membrane-associated (390 aa).

The first 14 residues, 1-14, serve as a signal peptide directing secretion; it reads MLLLILLFFKGLVC. Residues 15–33 constitute a propeptide, removed in sCD1e; that stretch reads HEKSIVGPQPLGWHHPAEA. Residues N49 and N70 are each glycosylated (N-linked (GlcNAc...) asparagine). 2 disulfides stabilise this stretch: C131–C194 and C234–C288. In terms of domain architecture, Ig-like spans 215–306; that stretch reads PEVWLSRGPS…GHDIIIHWGG (92 aa). Residues 305-325 form a helical membrane-spanning segment; it reads GGYSILLILMYVAVIVTLVTL.

Heterodimer with B2M (beta-2-microglobulin). The association with B2M appears to be facilitated by the presence of the propeptide. Post-translationally, mono-ubiquitinated. Proteolytically cleaved in endosomes to yield a soluble form.

It localises to the golgi apparatus membrane. The protein localises to the early endosome. The protein resides in the late endosome. Its subcellular location is the lysosome lumen. Functionally, T-cell surface glycoprotein CD1e, soluble is required for the presentation of glycolipid antigens on the cell surface. The membrane-associated form is not active. In Cavia porcellus (Guinea pig), this protein is T-cell surface glycoprotein CD1e, membrane-associated (CD1E).